We begin with the raw amino-acid sequence, 156 residues long: MEKTFPMTQEGLDKLKLELENLKLVKRPEVIDRIKVARSYGDLSENSEYEAAKDEQAFIEGRISTVETMIRYAEIVDNAKIAKDEVALGKNVTFVEVGETDEESYQIVGTAEADPFSGKISNESPIARVLIGKKVGDIVNVPLPVGEMTVKIVKVD.

Residues 7–27 (MTQEGLDKLKLELENLKLVKR) adopt a coiled-coil conformation.

It belongs to the GreA/GreB family.

In terms of biological role, necessary for efficient RNA polymerase transcription elongation past template-encoded arresting sites. The arresting sites in DNA have the property of trapping a certain fraction of elongating RNA polymerases that pass through, resulting in locked ternary complexes. Cleavage of the nascent transcript by cleavage factors such as GreA or GreB allows the resumption of elongation from the new 3'terminus. GreA releases sequences of 2 to 3 nucleotides. This chain is Transcription elongation factor GreA, found in Lactococcus lactis subsp. lactis (strain IL1403) (Streptococcus lactis).